Reading from the N-terminus, the 415-residue chain is WD repeat and FYVE domain-containing protein 2 (415 aa).

WD repeat units lie at residues 71 to 103 (HHFM…YEFS), 119 to 148 (CHAG…IVWH), 202 to 232 (AHTN…IMWD), and 245 to 284 (GHNG…VETP). The FYVE-type zinc-finger motif lies at 286-357 (WKTSDCCQKC…ICNDCNARMK (72 aa)). Residues C292, C295, C319, C322, C327, C330, C349, and C352 each coordinate Zn(2+). The WD 5 repeat unit spans residues 373-403 (EIHTGITAMHLQETLGLLVTSGQNRVIMIWD).

Plays a role in coelomocyte endocytosis. The sequence is that of WD repeat and FYVE domain-containing protein 2 (wdfy-2) from Caenorhabditis elegans.